A 425-amino-acid chain; its full sequence is Kynurenine/alpha-aminoadipate aminotransferase, mitochondrial (425 aa).

Residues 1–29 (MNYSRFLTATSLARKTSPIRATVEIMSRA) constitute a mitochondrion transit peptide. R20 contributes to the substrate binding site. A Phosphoserine modification is found at S40. 2 residues coordinate substrate: Y74 and Y142. K172 carries the post-translational modification N6-succinyllysine. K179 bears the N6-acetyllysine mark. Basic and acidic residues predominate over residues 179-188 (KPEDSKDPTK). The interval 179–208 (KPEDSKDPTKRTPKFLYTIPNGNNPTGNSL) is disordered. Positions 198-208 (PNGNNPTGNSL) are enriched in polar residues. Position 202 (N202) interacts with substrate. K263 carries the N6-(pyridoxal phosphate)lysine; alternate modification. An N6-acetyllysine; alternate mark is found at K263 and K339. N6-succinyllysine; alternate occurs at positions 263 and 339. K351 carries the N6-acetyllysine modification. The residue at position 367 (K367) is an N6-acetyllysine; alternate. K367 carries the N6-succinyllysine; alternate modification. R399 contacts substrate. N6-acetyllysine is present on K422.

It belongs to the class-I pyridoxal-phosphate-dependent aminotransferase family. Homodimer. Pyridoxal 5'-phosphate is required as a cofactor. In terms of processing, the N-terminus is blocked.

It is found in the mitochondrion. The enzyme catalyses L-kynurenine + 2-oxoglutarate = kynurenate + L-glutamate + H2O. It carries out the reaction L-2-aminoadipate + 2-oxoglutarate = 2-oxoadipate + L-glutamate. It catalyses the reaction glycine + 2-oxoglutarate = glyoxylate + L-glutamate. The catalysed reaction is L-kynurenine + glyoxylate = kynurenate + glycine + H2O. The enzyme catalyses 3-hydroxy-L-kynurenine + glyoxylate = xanthurenate + glycine + H2O. It carries out the reaction 2-oxohexanoate + L-kynurenine = L-2-aminohexanoate + kynurenate + H2O. It catalyses the reaction 3-phenylpyruvate + L-kynurenine = kynurenate + L-phenylalanine + H2O. The catalysed reaction is 4-methylsulfanyl-2-oxobutanoate + L-kynurenine = kynurenate + L-methionine + H2O. The enzyme catalyses 2-oxo-3-sulfanylpropanoate + L-kynurenine = kynurenate + L-cysteine + H2O. It carries out the reaction indole-3-pyruvate + L-kynurenine = kynurenate + L-tryptophan + H2O. It catalyses the reaction 2-oxopentanoate + L-kynurenine = L-2-aminopentanoate + kynurenate + H2O. The catalysed reaction is 4-methyl-2-oxopentanoate + L-kynurenine = kynurenate + L-leucine + H2O. The enzyme catalyses glyoxylate + L-methionine = 4-methylsulfanyl-2-oxobutanoate + glycine. It carries out the reaction L-2-aminoadipate + glyoxylate = 2-oxoadipate + glycine. It catalyses the reaction L-tyrosine + glyoxylate = 3-(4-hydroxyphenyl)pyruvate + glycine. The catalysed reaction is glyoxylate + L-phenylalanine = 3-phenylpyruvate + glycine. The enzyme catalyses L-tryptophan + glyoxylate = indole-3-pyruvate + glycine. It carries out the reaction L-leucine + glyoxylate = 4-methyl-2-oxopentanoate + glycine. It catalyses the reaction 2-oxobutanoate + L-kynurenine = (2S)-2-aminobutanoate + kynurenate + H2O. The catalysed reaction is 2-oxoadipate + L-kynurenine = L-2-aminoadipate + kynurenate + H2O. The enzyme catalyses 2-oxoadipate + L-kynurenine = 4-(2-aminophenyl)-2,4-dioxobutanoate + L-2-aminoadipate. It participates in amino-acid degradation; L-lysine degradation via saccharopine pathway; glutaryl-CoA from L-lysine: step 4/6. In terms of biological role, transaminase with broad substrate specificity. Has transaminase activity towards aminoadipate, kynurenine, methionine and glutamate. Shows activity also towards tryptophan, aspartate and hydroxykynurenine. Accepts a variety of oxo-acids as amino-group acceptors, with a preference for 2-oxoglutarate, 2-oxocaproic acid, phenylpyruvate and alpha-oxo-gamma-methiol butyric acid. Can also use glyoxylate as amino-group acceptor (in vitro). The polypeptide is Kynurenine/alpha-aminoadipate aminotransferase, mitochondrial (Rattus norvegicus (Rat)).